Consider the following 251-residue polypeptide: DNA repair protein RecO (251 aa).

It belongs to the RecO family.

Involved in DNA repair and RecF pathway recombination. This chain is DNA repair protein RecO, found in Albidiferax ferrireducens (strain ATCC BAA-621 / DSM 15236 / T118) (Rhodoferax ferrireducens).